We begin with the raw amino-acid sequence, 314 residues long: Methionyl-tRNA formyltransferase (314 aa).

113–116 (SLLP) contacts (6S)-5,6,7,8-tetrahydrofolate.

It belongs to the Fmt family.

The enzyme catalyses L-methionyl-tRNA(fMet) + (6R)-10-formyltetrahydrofolate = N-formyl-L-methionyl-tRNA(fMet) + (6S)-5,6,7,8-tetrahydrofolate + H(+). Attaches a formyl group to the free amino group of methionyl-tRNA(fMet). The formyl group appears to play a dual role in the initiator identity of N-formylmethionyl-tRNA by promoting its recognition by IF2 and preventing the misappropriation of this tRNA by the elongation apparatus. In Chlorobaculum tepidum (strain ATCC 49652 / DSM 12025 / NBRC 103806 / TLS) (Chlorobium tepidum), this protein is Methionyl-tRNA formyltransferase.